A 369-amino-acid polypeptide reads, in one-letter code: Queuine tRNA-ribosyltransferase (369 aa).

The active-site Proton acceptor is Asp89. Substrate contacts are provided by residues 89–93 (DSGGF), Asp142, Gln184, and Gly211. Positions 242-248 (GGGSPEL) are RNA binding. Asp261 serves as the catalytic Nucleophile. Residues 266–270 (TRIAR) are RNA binding; important for wobble base 34 recognition. Zn(2+)-binding residues include Cys299, Cys301, Cys304, and His330.

Belongs to the queuine tRNA-ribosyltransferase family. As to quaternary structure, homodimer. Within each dimer, one monomer is responsible for RNA recognition and catalysis, while the other monomer binds to the replacement base PreQ1. Requires Zn(2+) as cofactor.

It catalyses the reaction 7-aminomethyl-7-carbaguanine + guanosine(34) in tRNA = 7-aminomethyl-7-carbaguanosine(34) in tRNA + guanine. The protein operates within tRNA modification; tRNA-queuosine biosynthesis. In terms of biological role, catalyzes the base-exchange of a guanine (G) residue with the queuine precursor 7-aminomethyl-7-deazaguanine (PreQ1) at position 34 (anticodon wobble position) in tRNAs with GU(N) anticodons (tRNA-Asp, -Asn, -His and -Tyr). Catalysis occurs through a double-displacement mechanism. The nucleophile active site attacks the C1' of nucleotide 34 to detach the guanine base from the RNA, forming a covalent enzyme-RNA intermediate. The proton acceptor active site deprotonates the incoming PreQ1, allowing a nucleophilic attack on the C1' of the ribose to form the product. After dissociation, two additional enzymatic reactions on the tRNA convert PreQ1 to queuine (Q), resulting in the hypermodified nucleoside queuosine (7-(((4,5-cis-dihydroxy-2-cyclopenten-1-yl)amino)methyl)-7-deazaguanosine). The chain is Queuine tRNA-ribosyltransferase from Thermotoga neapolitana (strain ATCC 49049 / DSM 4359 / NBRC 107923 / NS-E).